The following is a 335-amino-acid chain: Tetraacyldisaccharide 4'-kinase (335 aa).

Position 58–65 (58–65) interacts with ATP; the sequence is VVGGSGKT.

Belongs to the LpxK family.

The catalysed reaction is a lipid A disaccharide + ATP = a lipid IVA + ADP + H(+). The protein operates within glycolipid biosynthesis; lipid IV(A) biosynthesis; lipid IV(A) from (3R)-3-hydroxytetradecanoyl-[acyl-carrier-protein] and UDP-N-acetyl-alpha-D-glucosamine: step 6/6. Functionally, transfers the gamma-phosphate of ATP to the 4'-position of a tetraacyldisaccharide 1-phosphate intermediate (termed DS-1-P) to form tetraacyldisaccharide 1,4'-bis-phosphate (lipid IVA). The sequence is that of Tetraacyldisaccharide 4'-kinase from Hydrogenovibrio crunogenus (strain DSM 25203 / XCL-2) (Thiomicrospira crunogena).